A 435-amino-acid polypeptide reads, in one-letter code: Mitogen-activated protein kinase HOG1 (435 aa).

At Thr2 the chain carries N-acetylthreonine. One can recognise a Protein kinase domain in the interval 23–302 (YNDLNPVGMG…AADALAHPYS (280 aa)). Residues 29–37 (VGMGAFGLV) and Lys52 each bind ATP. Asp144 acts as the Proton acceptor in catalysis. Positions 156 and 161 each coordinate arsenite. Thr174 is subject to Phosphothreonine; by PBS2. The TXY signature appears at 174 to 176 (TGY). The residue at position 176 (Tyr176) is a Phosphotyrosine; by PBS2. Cys205 contacts arsenite.

The protein belongs to the protein kinase superfamily. Ser/Thr protein kinase family. MAP kinase subfamily. HOG1 sub-subfamily. Interacts with CDC37, HOT1, KIN28, PTP2, PTP3, RBP1, RCK2, RPD3, SIC1, SMP1 and SIN4. Mg(2+) serves as cofactor. Post-translationally, activated by PBS2-mediated concomitant phosphorylation at Thr-174 and Tyr-176. Dually phosphorylated on Thr-174 and Tyr-176, which activates the enzyme.

It is found in the cytoplasm. The protein resides in the nucleus. The catalysed reaction is L-seryl-[protein] + ATP = O-phospho-L-seryl-[protein] + ADP + H(+). The enzyme catalyses L-threonyl-[protein] + ATP = O-phospho-L-threonyl-[protein] + ADP + H(+). Activated by tyrosine and threonine phosphorylation. Inactivated by dephosphorylation via recruitment of PTC1 to the PBS2-HOG1 complex after adaptation to osmotic stress. PTP2 and PTP3 inactivate HOG1 by dephosphorylating Tyr-176, while the PP2Cs PTC1 and PTC2 or PTC3 dephosphorylate Thr-174 in the activation loop. Its function is as follows. Proline-directed serine/threonine-protein kinase involved in a signal transduction pathway that is activated by changes in the osmolarity of the extracellular environment. Controls osmotic regulation of transcription via the stress response element (STRE) in promoters of target genes. Upon osmotic shock, associates with the SKO1-SSN6-TUP1 complex, phosphorylates SKO1, and converts it into an activator that subsequently recruits Swi/Snf and SAGA complexes. Activates the SMP1 transcription factor and the RCK2 kinase, both also involved in the regulation of the expression of a subset of osmotic stress-related genes. Phosphorylation of HSL1 by HOG1 leads to a G2 arrest essential for cell survival at high osmolarity. Also mediates cell-cycle arrest in G1 phase by the dual targeting of SIC1. Phosphorylates methyltransferase DOT1 at least on 'Ser-565' and 'Thr-576'. Regulates MFA2 ARE-mediated translation in response to carbon source. Targets RPD3 histone deacetylase to osmoresponsive promoters to induce gene expression on stress. Required for the Golgi apparatus localization of MNN1. Plays an essential role in maintaining water homeostasis, arsenite detoxification, copper-resistance, cold-resistance, hydrogen peroxide response, adaptation to citric acid stress, and repression of the mating pathway activity. Functions as an arsenic sensor and effector via direct binding to arsenic and subsequent phosphorylation of the ARR1 transcription factor. The protein is Mitogen-activated protein kinase HOG1 (HOG1) of Saccharomyces cerevisiae (strain ATCC 204508 / S288c) (Baker's yeast).